A 111-amino-acid chain; its full sequence is Large ribosomal subunit protein uL22 (111 aa).

Belongs to the universal ribosomal protein uL22 family. As to quaternary structure, part of the 50S ribosomal subunit.

This protein binds specifically to 23S rRNA; its binding is stimulated by other ribosomal proteins, e.g. L4, L17, and L20. It is important during the early stages of 50S assembly. It makes multiple contacts with different domains of the 23S rRNA in the assembled 50S subunit and ribosome. Its function is as follows. The globular domain of the protein is located near the polypeptide exit tunnel on the outside of the subunit, while an extended beta-hairpin is found that lines the wall of the exit tunnel in the center of the 70S ribosome. The protein is Large ribosomal subunit protein uL22 of Xylella fastidiosa (strain 9a5c).